The chain runs to 371 residues: MSHNTFGHLFRVTTWGESHGAALGCVVDGCPPGIRFTRDEIQAELDKRRPGQSRFVTQRREPDEVKVLSGFVLDEDGETMITTGTPVSMLIENVDQRSKDYGEIARQYRPGHADYTYDVKYGIRDYRGGGRSSARETAARVAAGALARKVVPGMVVRGALVSMGEKSIDRANWNWNFIGDAENPFFTPDPASVPVFTQYLDGIRKAGSSVGAVIEIVADGVPPGLGAPIYAKLDQDIASGLMSINAVKGVEIGNGFEAARITGEQNADEMRIGNDGKPVFLSNNAGGILGGISTGQAIVARFAVKPTSSILTPRKSIDKDGNDVEVMTKGRHDPCVGIRAVPIGEAMVACAIADHYLRHRGQTGKGIGSRE.

Positions 48 and 54 each coordinate NADP(+). FMN contacts are provided by residues 131–133 (RSS), 245–246 (NA), Gly290, 305–309 (KPTSS), and Arg331.

It belongs to the chorismate synthase family. In terms of assembly, homotetramer. The cofactor is FMNH2.

The catalysed reaction is 5-O-(1-carboxyvinyl)-3-phosphoshikimate = chorismate + phosphate. It participates in metabolic intermediate biosynthesis; chorismate biosynthesis; chorismate from D-erythrose 4-phosphate and phosphoenolpyruvate: step 7/7. In terms of biological role, catalyzes the anti-1,4-elimination of the C-3 phosphate and the C-6 proR hydrogen from 5-enolpyruvylshikimate-3-phosphate (EPSP) to yield chorismate, which is the branch point compound that serves as the starting substrate for the three terminal pathways of aromatic amino acid biosynthesis. This reaction introduces a second double bond into the aromatic ring system. The sequence is that of Chorismate synthase from Mesorhizobium japonicum (strain LMG 29417 / CECT 9101 / MAFF 303099) (Mesorhizobium loti (strain MAFF 303099)).